The chain runs to 659 residues: Serine/threonine-protein kinase StkP (659 aa).

Over 1 to 342 (MIQIGKIFAG…PQAPKKHRFK (342 aa)) the chain is Cytoplasmic. The 262-residue stretch at 12–273 (YRIVKQIGRG…EMYVDLSSSL (262 aa)) folds into the Protein kinase domain. ATP is bound by residues 18–26 (IGRGGMADV) and Lys-42. Asp-136 (proton acceptor) is an active-site residue. Residues 343 to 363 (MRYLILLASLVLVAASLIWIL) form a helical membrane-spanning segment. Residues 364-659 (SRSPATIAIP…YKPKTTSATP (296 aa)) lie on the Periplasmic side of the membrane. PASTA domains follow at residues 366–433 (SPAT…VVSS), 434–505 (GKQS…TVAK), 506–577 (KATT…TVAK), and 578–651 (KVTS…SIYK). The tract at residues 541-561 (EEESSESEPGTIMKQSPGAGT) is disordered.

It belongs to the protein kinase superfamily. Ser/Thr protein kinase family. Homodimer. StkP forms dimers through its transmembrane and extracellular domains. Dimer formation likely promotes autophosphorylation activity and might be necessary for targeting StkP substrate. Interacts with PhpP via its kinase domain. Post-translationally, autophosphorylation occurs predominantly on threonine residue(s) and weakly on serine residue(s). Dephosphorylated by PhpP.

It is found in the cell membrane. It catalyses the reaction L-seryl-[protein] + ATP = O-phospho-L-seryl-[protein] + ADP + H(+). The catalysed reaction is L-threonyl-[protein] + ATP = O-phospho-L-threonyl-[protein] + ADP + H(+). StkP is activated continuously during growth and its activity is inhibited upon growth arrest. Inhibited by staurosporine, a known protein kinase inhibitor. In terms of biological role, protein kinase involved in signal transduction pathways that regulate various cellular processes. Likely senses intracellular peptidoglycan subunits present in the cell division septa of actively growing cells; thus, intracellular unlinked peptidoglycan may serve as the signal molecules that trigger StkP phosphorylation activity on a set of substrates. Plays a crucial role in the regulation of cell shape and cell division of S.pneumoniae through control of at least DivIVA activity. Is involved in competence triggering, via the transduction of signals culminating directly or indirectly in ComD activation. Is important for the resistance of S.pneumoniae to various environmental stress conditions. Appears to be a global regulator that positively controls the transcription of a set of genes encoding functions involved in cell wall metabolism, pyrimidine biosynthesis, DNA repair, iron uptake, and oxidative stress response, and that seems to down-regulate genes employed in competence. Since StkP is unlikely to directly regulate transcription, the input signal must be transmitted through an effector molecule. Identified target substrates that are specifically phosphorylated by StkP in vivo, mainly on threonine residues, are DivIVA, GlmM, PpaC, MapZ, KhpB (also called EloR/Jag) and StkP itself. Autophosphorylated StkP is a substrate for the cotranscribed protein phosphatase PhpP; PhpP and StkP appear to constitute a functional signaling couple in vivo. This is Serine/threonine-protein kinase StkP (stkP) from Streptococcus pneumoniae.